The primary structure comprises 318 residues: L-lactate dehydrogenase (318 aa).

NAD(+) contacts are provided by residues valine 18, aspartate 39, lysine 44, tyrosine 69, and 83 to 84; that span reads GA. Substrate is bound by residues glutamine 86 and arginine 92. NAD(+)-binding positions include serine 105, 122–124, and serine 147; that span reads VSN. 124 to 127 serves as a coordination point for substrate; the sequence is NPVD. A substrate-binding site is contributed by 152 to 155; it reads DTSR. The active-site Proton acceptor is histidine 179. Residue tyrosine 225 is modified to Phosphotyrosine. Threonine 234 serves as a coordination point for substrate.

It belongs to the LDH/MDH superfamily. LDH family. As to quaternary structure, homotetramer.

It localises to the cytoplasm. It carries out the reaction (S)-lactate + NAD(+) = pyruvate + NADH + H(+). Its pathway is fermentation; pyruvate fermentation to lactate; (S)-lactate from pyruvate: step 1/1. Its function is as follows. Catalyzes the conversion of lactate to pyruvate. The polypeptide is L-lactate dehydrogenase (Clostridium botulinum (strain Kyoto / Type A2)).